The following is a 126-amino-acid chain: Small ribosomal subunit protein uS13 (126 aa).

The tract at residues 98-126 (PVRGQSTKNNARTRKGRKKTVANKKKATK) is disordered. Residues 108–126 (ARTRKGRKKTVANKKKATK) show a composition bias toward basic residues.

It belongs to the universal ribosomal protein uS13 family. In terms of assembly, part of the 30S ribosomal subunit. Forms a loose heterodimer with protein S19. Forms two bridges to the 50S subunit in the 70S ribosome.

In terms of biological role, located at the top of the head of the 30S subunit, it contacts several helices of the 16S rRNA. In the 70S ribosome it contacts the 23S rRNA (bridge B1a) and protein L5 of the 50S subunit (bridge B1b), connecting the 2 subunits; these bridges are implicated in subunit movement. Contacts the tRNAs in the A and P-sites. In Bacteroides fragilis (strain ATCC 25285 / DSM 2151 / CCUG 4856 / JCM 11019 / LMG 10263 / NCTC 9343 / Onslow / VPI 2553 / EN-2), this protein is Small ribosomal subunit protein uS13.